The primary structure comprises 309 residues: Elongation factor Ts (309 aa).

Residues 82-85 form an involved in Mg(2+) ion dislocation from EF-Tu region; sequence TDFV.

It belongs to the EF-Ts family.

It localises to the cytoplasm. In terms of biological role, associates with the EF-Tu.GDP complex and induces the exchange of GDP to GTP. It remains bound to the aminoacyl-tRNA.EF-Tu.GTP complex up to the GTP hydrolysis stage on the ribosome. This is Elongation factor Ts from Rickettsia felis (strain ATCC VR-1525 / URRWXCal2) (Rickettsia azadi).